Reading from the N-terminus, the 309-residue chain is tRNA uridine(34) hydroxylase (309 aa).

Positions 123–217 (DDPEVIVVDT…YLEEVPEEQT (95 aa)) constitute a Rhodanese domain. Cysteine 177 functions as the Cysteine persulfide intermediate in the catalytic mechanism.

Belongs to the TrhO family.

The catalysed reaction is uridine(34) in tRNA + AH2 + O2 = 5-hydroxyuridine(34) in tRNA + A + H2O. In terms of biological role, catalyzes oxygen-dependent 5-hydroxyuridine (ho5U) modification at position 34 in tRNAs. The protein is tRNA uridine(34) hydroxylase of Saccharophagus degradans (strain 2-40 / ATCC 43961 / DSM 17024).